We begin with the raw amino-acid sequence, 355 residues long: MVDAATLEKLEAGFSKLAASDSKSLLKKYLTREVFDALKNKKTSFGSTLLDSIQSGVENLHSGVGIYAPDAEAYVVFADLFDPIIEDYHNGFKKTDKHPPKNWGDVETLGNLDPAGEFVVSTRVRCGRSMEGYPFNPCLTEAQYKEMEEKVSSTLSGLEGELKGTFFPLTGMSKETQQQLIDDHFLFKEGDRFLQAANACRFWPSGRGIYHNENKTFLVWCNEEDHLRLISMQMGGDLKQVYKRLVRGVNDIAKRIPFSHNERLGFLTFCPTNLGTTVRASVHIKLPKLAADKAKLEEVASKYHLQVRGTRGEHTEAEGGVYDISNKRRMGLTEYEAVKEMYDGIAELIKIEKSL.

The region spanning T6–N90 is the Phosphagen kinase N-terminal domain. G63–Y67 contacts substrate. The Phosphagen kinase C-terminal domain occupies F118–L355. Residues S121–R125 and H184 contribute to the ATP site. E224 serves as a coordination point for substrate. Residue R228 coordinates ATP. Residue C270 participates in substrate binding. ATP-binding positions include R279–H283 and R308–E313. A substrate-binding site is contributed by E313.

It belongs to the ATP:guanido phosphotransferase family.

It catalyses the reaction L-arginine + ATP = N(omega)-phospho-L-arginine + ADP + H(+). The chain is Arginine kinase (ARGK) from Plodia interpunctella (Indianmeal moth).